The chain runs to 86 residues: Cell division topological specificity factor (86 aa).

This sequence belongs to the MinE family.

Functionally, prevents the cell division inhibition by proteins MinC and MinD at internal division sites while permitting inhibition at polar sites. This ensures cell division at the proper site by restricting the formation of a division septum at the midpoint of the long axis of the cell. The chain is Cell division topological specificity factor from Alteromonas mediterranea (strain DSM 17117 / CIP 110805 / LMG 28347 / Deep ecotype).